A 717-amino-acid chain; its full sequence is ATP-dependent zinc metalloprotease FtsH (717 aa).

At 1-7 the chain is on the cytoplasmic side; it reads MFKDKKM. A helical transmembrane segment spans residues 8–28; that stretch reads LKYIVIYSIIAFGILLTFNMV. Residues 29 to 109 are Extracellular-facing; sequence KDEMLYEKVD…VEFNVTKPEN (81 aa). The chain crosses the membrane as a helical span at residues 110-130; the sequence is YQLLGLLMSWVFPLILIFFVG. The Cytoplasmic segment spans residues 131-717; sequence RMMFSKMNNK…SSTNNKVDGE (587 aa). ATP is bound at residue 206–213; the sequence is GPPGTGKT. H427 is a binding site for Zn(2+). Residue E428 is part of the active site. Zn(2+)-binding residues include H431 and D504. A disordered region spans residues 670-717; it reads KLARANNEANNDALDSSKENEEVKSNVNDGATEEKKDDSSTNNKVDGE. Composition is skewed to basic and acidic residues over residues 684–693 and 701–717; these read DSSKENEEVK and TEEKKDDSSTNNKVDGE.

This sequence in the central section; belongs to the AAA ATPase family. It in the C-terminal section; belongs to the peptidase M41 family. As to quaternary structure, homohexamer. Zn(2+) is required as a cofactor.

The protein resides in the cell membrane. Acts as a processive, ATP-dependent zinc metallopeptidase for both cytoplasmic and membrane proteins. Plays a role in the quality control of integral membrane proteins. The chain is ATP-dependent zinc metalloprotease FtsH from Clostridium perfringens (strain ATCC 13124 / DSM 756 / JCM 1290 / NCIMB 6125 / NCTC 8237 / Type A).